The chain runs to 1128 residues: Lysylphosphatidylglycerol biosynthesis bifunctional protein LysX (1128 aa).

Positions 1–47 (MDNPPPTGVAPRHLPPGSVHTGKVTASLSHRRPDSVQDAPPAPVPHR) are disordered. Residues 1 to 632 (MDNPPPTGVA…GLHADGSPPD (632 aa)) form a phosphatidylglycerol lysyltransferase region. A run of 6 helical transmembrane segments spans residues 55–75 (VPHI…LWSL), 97–117 (APDT…AIAS), 121–141 (IAWW…GLRF), 147–167 (INAL…IAAW), 184–204 (GVLV…VEVF), and 240–260 (FVNV…VLTL). The interval 619–644 (DTLTGLHADGSPPDWPKPDLLDSGPR) is disordered. The lysine--tRNA ligase stretch occupies residues 633-1128 (WPKPDLLDSG…TLPFPLVKPR (496 aa)). Positions 634-644 (PKPDLLDSGPR) are enriched in basic and acidic residues. Mg(2+) contacts are provided by Asp-1040 and Glu-1047.

It in the N-terminal section; belongs to the LPG synthetase family. The protein in the C-terminal section; belongs to the class-II aminoacyl-tRNA synthetase family. Mg(2+) serves as cofactor.

It is found in the cell membrane. It carries out the reaction tRNA(Lys) + L-lysine + ATP = L-lysyl-tRNA(Lys) + AMP + diphosphate. The catalysed reaction is L-lysyl-tRNA(Lys) + a 1,2-diacyl-sn-glycero-3-phospho-(1'-sn-glycerol) = a 1,2-diacyl-sn-glycero-3-phospho-1'-(3'-O-L-lysyl)-sn-glycerol + tRNA(Lys). Catalyzes the production of L-lysyl-tRNA(Lys)transfer and the transfer of a lysyl group from L-lysyl-tRNA(Lys) to membrane-bound phosphatidylglycerol (PG), which produces lysylphosphatidylglycerol (LPG), one of the components of the bacterial membrane with a positive net charge. LPG synthesis contributes to the resistance to cationic antimicrobial peptides (CAMPs) and likely protects M.tuberculosis against the CAMPs produced by competiting microorganisms (bacteriocins). In fact, the modification of anionic phosphatidylglycerol with positively charged L-lysine results in repulsion of the peptides. This chain is Lysylphosphatidylglycerol biosynthesis bifunctional protein LysX (lysX), found in Nocardia farcinica (strain IFM 10152).